The sequence spans 463 residues: Asparagine--tRNA ligase (463 aa).

Belongs to the class-II aminoacyl-tRNA synthetase family. In terms of assembly, homodimer.

It localises to the cytoplasm. The enzyme catalyses tRNA(Asn) + L-asparagine + ATP = L-asparaginyl-tRNA(Asn) + AMP + diphosphate + H(+). In Clostridium kluyveri (strain ATCC 8527 / DSM 555 / NBRC 12016 / NCIMB 10680 / K1), this protein is Asparagine--tRNA ligase.